Here is a 674-residue protein sequence, read N- to C-terminus: E3 ubiquitin ligase Rnf157 (674 aa).

The segment at 277-316 (CVVCLSDVRDTLILPCRHLCLCNACADTLRYQASNCPICR) adopts an RING-type zinc-finger fold. Disordered stretches follow at residues 376 to 404 (LTPS…GSDI) and 433 to 610 (QNSS…TGRE). Polar residues predominate over residues 469-508 (TPESENLTLSSSGAIDQSSCTGTPLSPTISSPEDPLSSSL). A compositionally biased stretch (low complexity) spans 509 to 526 (AQSIMSMASSHSQQSQLS). Residues 527–537 (TDTVSSMSGSY) are compositionally biased toward polar residues. Acidic residues predominate over residues 583-604 (EEMDAEGNVTEEEFASPEEDDG).

The protein resides in the cytoplasm. It carries out the reaction S-ubiquitinyl-[E2 ubiquitin-conjugating enzyme]-L-cysteine + [acceptor protein]-L-lysine = [E2 ubiquitin-conjugating enzyme]-L-cysteine + N(6)-ubiquitinyl-[acceptor protein]-L-lysine.. Functionally, E3 ubiquitin ligase that ubiquitinates apbb1 for its degradation by the proteasome and thus prevents apoptosis and promotes survival of neurons. Has a dual role in neurons as it is also required for dendrite growth and maintenance for which its ligase activity is not critical. May act as a scaffold molecule to regulate this process. Acts as a downstream effector of the interconnected PI3K and MAPK signaling pathways and thus participates in the regulation of the cell cycle. In Xenopus laevis (African clawed frog), this protein is E3 ubiquitin ligase Rnf157 (rnf157).